The chain runs to 341 residues: Methionine import ATP-binding protein MetN 3 (341 aa).

Positions isoleucine 2 to valine 241 constitute an ABC transporter domain. An ATP-binding site is contributed by glycine 38 to serine 45.

This sequence belongs to the ABC transporter superfamily. Methionine importer (TC 3.A.1.24) family. In terms of assembly, the complex is composed of two ATP-binding proteins (MetN), two transmembrane proteins (MetI) and a solute-binding protein (MetQ).

The protein localises to the cell membrane. It carries out the reaction L-methionine(out) + ATP + H2O = L-methionine(in) + ADP + phosphate + H(+). The catalysed reaction is D-methionine(out) + ATP + H2O = D-methionine(in) + ADP + phosphate + H(+). In terms of biological role, part of the ABC transporter complex MetNIQ involved in methionine import. Responsible for energy coupling to the transport system. The polypeptide is Methionine import ATP-binding protein MetN 3 (Bacillus cereus (strain ATCC 14579 / DSM 31 / CCUG 7414 / JCM 2152 / NBRC 15305 / NCIMB 9373 / NCTC 2599 / NRRL B-3711)).